We begin with the raw amino-acid sequence, 492 residues long: Catalase (492 aa).

Active-site residues include His65 and Asn138. Tyr348 is a binding site for heme.

The protein belongs to the catalase family. In terms of assembly, homotetramer. Heme serves as cofactor.

Its subcellular location is the cytoplasm. It localises to the cytosol. The protein localises to the peroxisome matrix. The enzyme catalyses 2 H2O2 = O2 + 2 H2O. Functionally, catalyzes the degradation of hydrogen peroxide (H(2)O(2)) generated by peroxisomal oxidases to water and oxygen, thereby protecting cells from the toxic effects of hydrogen peroxide. In Helianthus annuus (Common sunflower), this protein is Catalase.